The chain runs to 758 residues: 5-methyltetrahydropteroyltriglutamate--homocysteine methyltransferase (758 aa).

Residues 16 to 19 (RELK) and lysine 112 each bind 5-methyltetrahydropteroyltri-L-glutamate. Residues 433–435 (IGS) and glutamate 486 contribute to the L-homocysteine site. L-methionine-binding positions include 433–435 (IGS) and glutamate 486. 5-methyltetrahydropteroyltri-L-glutamate contacts are provided by residues 517 to 518 (RC) and tryptophan 563. Aspartate 601 contributes to the L-homocysteine binding site. Aspartate 601 serves as a coordination point for L-methionine. Glutamate 607 is a 5-methyltetrahydropteroyltri-L-glutamate binding site. The Zn(2+) site is built by histidine 643, cysteine 645, and glutamate 667. Catalysis depends on histidine 696, which acts as the Proton donor. Cysteine 728 provides a ligand contact to Zn(2+).

This sequence belongs to the vitamin-B12 independent methionine synthase family. Zn(2+) is required as a cofactor.

It carries out the reaction 5-methyltetrahydropteroyltri-L-glutamate + L-homocysteine = tetrahydropteroyltri-L-glutamate + L-methionine. The protein operates within amino-acid biosynthesis; L-methionine biosynthesis via de novo pathway; L-methionine from L-homocysteine (MetE route): step 1/1. Catalyzes the transfer of a methyl group from 5-methyltetrahydrofolate to homocysteine resulting in methionine formation. In Neisseria meningitidis serogroup C (strain 053442), this protein is 5-methyltetrahydropteroyltriglutamate--homocysteine methyltransferase.